The chain runs to 379 residues: Succinyl-diaminopimelate desuccinylase (379 aa).

Zn(2+) is bound at residue His-70. Asp-72 is an active-site residue. Asp-103 lines the Zn(2+) pocket. The active-site Proton acceptor is the Glu-137. Residues Glu-138, Glu-166, and His-352 each coordinate Zn(2+).

This sequence belongs to the peptidase M20A family. DapE subfamily. Homodimer. Requires Zn(2+) as cofactor. The cofactor is Co(2+).

It carries out the reaction N-succinyl-(2S,6S)-2,6-diaminopimelate + H2O = (2S,6S)-2,6-diaminopimelate + succinate. The protein operates within amino-acid biosynthesis; L-lysine biosynthesis via DAP pathway; LL-2,6-diaminopimelate from (S)-tetrahydrodipicolinate (succinylase route): step 3/3. In terms of biological role, catalyzes the hydrolysis of N-succinyl-L,L-diaminopimelic acid (SDAP), forming succinate and LL-2,6-diaminopimelate (DAP), an intermediate involved in the bacterial biosynthesis of lysine and meso-diaminopimelic acid, an essential component of bacterial cell walls. The sequence is that of Succinyl-diaminopimelate desuccinylase from Burkholderia cenocepacia (strain ATCC BAA-245 / DSM 16553 / LMG 16656 / NCTC 13227 / J2315 / CF5610) (Burkholderia cepacia (strain J2315)).